Here is a 410-residue protein sequence, read N- to C-terminus: Mating-type locus allele B3 protein (410 aa).

The interval 1-110 (MSRDPKLSLS…ANVVSPGEGC (110 aa)) is variable domain between B alleles. Residues 107 to 184 (GEGCRNLSED…NARRRSGWSH (78 aa)) constitute a DNA-binding region (homeobox; TALE-type). Positions 111-410 (RNLSEDLPAY…PFLCLSVAFV (300 aa)) are highly conserved between B alleles. Disordered regions lie at residues 203 to 224 (AKLSSSNQSTPPSLTSEKPSDD) and 278 to 335 (TPKP…TPEL). A compositionally biased stretch (polar residues) spans 205-219 (LSSSNQSTPPSLTSE). Positions 276-308 (KKTPKPGMPRPVTTVAKRHPARKTKPAAKPKSR) match the Nuclear localization signal motif. Residues 291 to 307 (AKRHPARKTKPAAKPKS) show a composition bias toward basic residues. The segment covering 312–335 (PRASTTPSIDSTLDSSKLESTPEL) has biased composition (polar residues). The segment at 333–410 (PELSMCSTAD…PFLCLSVAFV (78 aa)) is not essential for B3 function.

It belongs to the TALE/M-ATYP homeobox family.

Its subcellular location is the nucleus. Functionally, the B locus has at least 25 alleles, and any combination of two different B alleles yields a multimeric regulatory protein, that activates genes responsible for the pathogenicity and for the sexual development of the fungus within the corn plant. The protein is Mating-type locus allele B3 protein of Mycosarcoma maydis (Corn smut fungus).